The sequence spans 214 residues: Probable transaldolase 1 (214 aa).

The active-site Schiff-base intermediate with substrate is the Lys-83.

It belongs to the transaldolase family. Type 3B subfamily.

The protein localises to the cytoplasm. It catalyses the reaction D-sedoheptulose 7-phosphate + D-glyceraldehyde 3-phosphate = D-erythrose 4-phosphate + beta-D-fructose 6-phosphate. The protein operates within carbohydrate degradation; pentose phosphate pathway; D-glyceraldehyde 3-phosphate and beta-D-fructose 6-phosphate from D-ribose 5-phosphate and D-xylulose 5-phosphate (non-oxidative stage): step 2/3. Its function is as follows. Transaldolase is important for the balance of metabolites in the pentose-phosphate pathway. In Listeria monocytogenes serotype 4b (strain F2365), this protein is Probable transaldolase 1.